The sequence spans 779 residues: Beta-galactosidase 15 (779 aa).

A signal peptide spans 1–19 (MVSLSFILCCVLVSSCAYA). N-linked (GlcNAc...) asparagine glycosylation is present at Asn-148. Catalysis depends on Glu-178, which acts as the Proton donor. Glu-247 acts as the Nucleophile in catalysis. Asn-248, Asn-345, Asn-374, Asn-489, Asn-495, and Asn-555 each carry an N-linked (GlcNAc...) asparagine glycan. One can recognise an SUEL-type lectin domain in the interval 694-779 (VYEKNVLELS…AKRLAVEAIC (86 aa)).

It belongs to the glycosyl hydrolase 35 family. As to expression, ubiquitous, with higher levels in roots and siliques.

It is found in the secreted. The protein localises to the extracellular space. The protein resides in the apoplast. The enzyme catalyses Hydrolysis of terminal non-reducing beta-D-galactose residues in beta-D-galactosides.. This Arabidopsis thaliana (Mouse-ear cress) protein is Beta-galactosidase 15 (BGAL15).